The primary structure comprises 154 residues: Ribonuclease P protein component (154 aa).

The protein belongs to the RnpA family. As to quaternary structure, consists of a catalytic RNA component (M1 or rnpB) and a protein subunit.

The catalysed reaction is Endonucleolytic cleavage of RNA, removing 5'-extranucleotides from tRNA precursor.. Its function is as follows. RNaseP catalyzes the removal of the 5'-leader sequence from pre-tRNA to produce the mature 5'-terminus. It can also cleave other RNA substrates such as 4.5S RNA. The protein component plays an auxiliary but essential role in vivo by binding to the 5'-leader sequence and broadening the substrate specificity of the ribozyme. In Chlorobaculum tepidum (strain ATCC 49652 / DSM 12025 / NBRC 103806 / TLS) (Chlorobium tepidum), this protein is Ribonuclease P protein component.